A 94-amino-acid polypeptide reads, in one-letter code: Large ribosomal subunit protein bL25 (94 aa).

The interval 1-20 (MFKFNAEVRQSQGKGASRRL) is disordered.

Belongs to the bacterial ribosomal protein bL25 family. In terms of assembly, part of the 50S ribosomal subunit; part of the 5S rRNA/L5/L18/L25 subcomplex. Contacts the 5S rRNA. Binds to the 5S rRNA independently of L5 and L18.

Functionally, this is one of the proteins that binds to the 5S RNA in the ribosome where it forms part of the central protuberance. The protein is Large ribosomal subunit protein bL25 of Pasteurella multocida (strain Pm70).